The following is a 799-amino-acid chain: Transcriptional activator FLO8 (799 aa).

The segment covering 1–10 (MSYKVNSSYP) has biased composition (polar residues). Disordered regions lie at residues 1–20 (MSYK…EQPY), 37–68 (TNSE…SDLK), 101–127 (AHLD…QNTF), 255–406 (TTGA…RVNK), 431–503 (NSKS…SVIL), 568–622 (ESGK…PHGF), 644–691 (VSQE…YDFD), and 705–758 (AYAS…NENQ). The span at 41-55 (QQRQQQQQQQQQQQQ) shows a compositional bias: low complexity. One can recognise a LisH domain in the interval 73–105 (CKNTLNEYIFDFLTKSSLKNTAAAFAQDAHLDR). Over residues 270–285 (DFTNVGPTQNRSQNVT) the composition is skewed to polar residues. Residues 307 to 317 (NNNTTNNTTNN) are compositionally biased toward low complexity. Residues 318 to 340 (KSPVNQPKSLKTMHSTDKPNNVP) are compositionally biased toward polar residues. The segment covering 341-353 (TSKSTRSRSATSK) has biased composition (low complexity). Basic residues predominate over residues 354-370 (AKGKVKAGLVAKRRRKN). Composition is skewed to polar residues over residues 371 to 396 (NTAT…TTSE) and 460 to 480 (KAST…NSVV). A compositionally biased stretch (basic residues) spans 482–497 (GKKRSPPNTRVSRRKS). 2 stretches are compositionally biased toward polar residues: residues 584-593 (SKVSASSPLS) and 660-675 (GNDS…TLST).

This sequence belongs to the FLO8 family.

The protein localises to the nucleus. Functionally, required for diploid filamentous growth, haploid invasive growth and flocculation. Putative transcriptional activator of FLO1. This is Transcriptional activator FLO8 (FLO8) from Saccharomyces cerevisiae (strain ATCC 204508 / S288c) (Baker's yeast).